A 245-amino-acid polypeptide reads, in one-letter code: 1-(5-phosphoribosyl)-5-[(5-phosphoribosylamino)methylideneamino] imidazole-4-carboxamide isomerase (245 aa).

The active-site Proton acceptor is the D8. D130 functions as the Proton donor in the catalytic mechanism.

It belongs to the HisA/HisF family.

It localises to the cytoplasm. It catalyses the reaction 1-(5-phospho-beta-D-ribosyl)-5-[(5-phospho-beta-D-ribosylamino)methylideneamino]imidazole-4-carboxamide = 5-[(5-phospho-1-deoxy-D-ribulos-1-ylimino)methylamino]-1-(5-phospho-beta-D-ribosyl)imidazole-4-carboxamide. It participates in amino-acid biosynthesis; L-histidine biosynthesis; L-histidine from 5-phospho-alpha-D-ribose 1-diphosphate: step 4/9. This chain is 1-(5-phosphoribosyl)-5-[(5-phosphoribosylamino)methylideneamino] imidazole-4-carboxamide isomerase, found in Azotobacter vinelandii (strain DJ / ATCC BAA-1303).